Reading from the N-terminus, the 274-residue chain is MDAPGFTASLVAGGVAGVSVDLILFPLDTIKTRLQSPQGFNKAGGFRGIYAGVPSAAVGSFPNAAAFFLTYEYVKSLLHTDSTSHFKPVKHMLAASTGEVVACLIRVPSEVVKQRAQVSASSKTLQIFLTILSEEGIQGLYRGYKSTVLREIPFSLVQFPLWESLKALWAWRRGHVVDSWQSAVCGAFAGGFAAAVTTPLDVAKTRIMLAKAGSSTAVGNVLSAMHGVWRSQGLAGLFAGVLPRMAAISMGGFIFLGAYDQARSLLLEVGRKSP.

Solcar repeat units follow at residues proline 4–leucine 77, phenylalanine 86–leucine 168, and valine 177–leucine 265. Transmembrane regions (helical) follow at residues glycine 5–phenylalanine 25, isoleucine 49–leucine 69, histidine 85–isoleucine 105, arginine 142–tryptophan 162, serine 182–valine 202, and phenylalanine 238–alanine 258.

It belongs to the mitochondrial carrier (TC 2.A.29) family.

The protein resides in the mitochondrion inner membrane. It catalyses the reaction S-adenosyl-L-homocysteine(out) + S-adenosyl-L-methionine(in) = S-adenosyl-L-homocysteine(in) + S-adenosyl-L-methionine(out). Mitochondrial S-adenosyl-L-methionine/S-adenosyl-L-homocysteine antiporter. Mediates the exchange of cytosolic S-adenosyl-L-methionine, the predominant methyl-group donor for macromolecule methylation processes, for mitochondrial S-adenosylhomocysteine(SAH), a by-product of methylation reactions. The sequence is that of Mitochondrial S-adenosylmethionine carrier protein from Mus musculus (Mouse).